Consider the following 194-residue polypeptide: NADH-quinone oxidoreductase subunit B (194 aa).

The [4Fe-4S] cluster site is built by C73, C74, C138, and C168.

The protein belongs to the complex I 20 kDa subunit family. NDH-1 is composed of 14 different subunits. Subunits NuoB, C, D, E, F, and G constitute the peripheral sector of the complex. It depends on [4Fe-4S] cluster as a cofactor.

The protein localises to the cell inner membrane. It catalyses the reaction a quinone + NADH + 5 H(+)(in) = a quinol + NAD(+) + 4 H(+)(out). Its function is as follows. NDH-1 shuttles electrons from NADH, via FMN and iron-sulfur (Fe-S) centers, to quinones in the respiratory chain. The immediate electron acceptor for the enzyme in this species is believed to be ubiquinone. Couples the redox reaction to proton translocation (for every two electrons transferred, four hydrogen ions are translocated across the cytoplasmic membrane), and thus conserves the redox energy in a proton gradient. The protein is NADH-quinone oxidoreductase subunit B of Rhizobium johnstonii (strain DSM 114642 / LMG 32736 / 3841) (Rhizobium leguminosarum bv. viciae).